The primary structure comprises 275 residues: Holocytochrome c-type synthase (275 aa).

Disordered regions lie at residues 1-59 (MGLS…KTNS) and 83-102 (KENLDPSNLMPPPNQTPAPD). Residue Gly2 is the site of N-myristoyl glycine attachment. A compositionally biased stretch (polar residues) spans 9-28 (AASTVQTSTPAASDHQTAAP). HRM repeat units follow at residues 31-36 (GCPMHE) and 41-46 (GCPVSA). Polar residues predominate over residues 48–59 (PSDSTCGSKTNS). Residues 91-102 (LMPPPNQTPAPD) show a composition bias toward pro residues.

It belongs to the cytochrome c-type heme lyase family.

Its subcellular location is the mitochondrion inner membrane. The protein resides in the membrane. The enzyme catalyses holo-[cytochrome c] = apo-[cytochrome c] + heme b. Lyase that catalyzes the covalent linking of the heme group to the cytochrome C apoprotein to produce the mature functional cytochrome. The polypeptide is Holocytochrome c-type synthase (Bos taurus (Bovine)).